We begin with the raw amino-acid sequence, 494 residues long: Glycerol kinase (494 aa).

Thr13 contributes to the ADP binding site. ATP is bound by residues Thr13, Thr14, and Ser15. Thr13 serves as a coordination point for sn-glycerol 3-phosphate. Arg17 is a binding site for ADP. 4 residues coordinate sn-glycerol 3-phosphate: Arg83, Glu84, Tyr135, and Asp244. Glycerol is bound by residues Arg83, Glu84, Tyr135, Asp244, and Gln245. The ADP site is built by Thr266 and Gly309. Residues Thr266, Gly309, Gln313, and Gly410 each contribute to the ATP site. ADP-binding residues include Gly410 and Asn414.

The protein belongs to the FGGY kinase family.

It catalyses the reaction glycerol + ATP = sn-glycerol 3-phosphate + ADP + H(+). The protein operates within polyol metabolism; glycerol degradation via glycerol kinase pathway; sn-glycerol 3-phosphate from glycerol: step 1/1. With respect to regulation, inhibited by fructose 1,6-bisphosphate (FBP). In terms of biological role, key enzyme in the regulation of glycerol uptake and metabolism. Catalyzes the phosphorylation of glycerol to yield sn-glycerol 3-phosphate. This Shewanella baltica (strain OS223) protein is Glycerol kinase.